The chain runs to 310 residues: HPr kinase/phosphorylase (310 aa).

Catalysis depends on residues His-138 and Lys-159. ATP is bound at residue Gly-153–Ser-160. Ser-160 provides a ligand contact to Mg(2+). Catalysis depends on Asp-177, which acts as the Proton acceptor; for phosphorylation activity. Proton donor; for dephosphorylation activity. Residues Leu-201–Asn-210 form an important for the catalytic mechanism of both phosphorylation and dephosphorylation region. Glu-202 contributes to the Mg(2+) binding site. Arg-243 is an active-site residue. The segment at Pro-264–Arg-269 is important for the catalytic mechanism of dephosphorylation.

The protein belongs to the HPrK/P family. Homohexamer. Requires Mg(2+) as cofactor.

It carries out the reaction [HPr protein]-L-serine + ATP = [HPr protein]-O-phospho-L-serine + ADP + H(+). The enzyme catalyses [HPr protein]-O-phospho-L-serine + phosphate + H(+) = [HPr protein]-L-serine + diphosphate. Functionally, catalyzes the ATP- as well as the pyrophosphate-dependent phosphorylation of a specific serine residue in HPr, a phosphocarrier protein of the phosphoenolpyruvate-dependent sugar phosphotransferase system (PTS). HprK/P also catalyzes the pyrophosphate-producing, inorganic phosphate-dependent dephosphorylation (phosphorolysis) of seryl-phosphorylated HPr (P-Ser-HPr). The two antagonistic activities of HprK/P are regulated by several intracellular metabolites, which change their concentration in response to the absence or presence of rapidly metabolisable carbon sources (glucose, fructose, etc.) in the growth medium. Also phosphorylates/dephosphorylates the HPr-like catabolite repression protein crh on a specific serine residue. Therefore, by controlling the phosphorylation state of HPr and crh, HPrK/P is a sensor enzyme that plays a major role in the regulation of carbon metabolism and sugar transport: it mediates carbon catabolite repression (CCR), and regulates PTS-catalyzed carbohydrate uptake and inducer exclusion. This chain is HPr kinase/phosphorylase, found in Shouchella clausii (strain KSM-K16) (Alkalihalobacillus clausii).